Consider the following 643-residue polypeptide: Enzymatic polyprotein (643 aa).

In terms of domain architecture, Peptidase A3A spans 6-209 (NPNATFITVK…KEVNVPNNIP (204 aa)). The active-site For protease activity is aspartate 26. Positions 226–410 (VRKGIIEESK…QTIDFLGLTL (185 aa)) constitute a Reverse transcriptase domain. 3 residues coordinate Mg(2+): aspartate 296, aspartate 360, and aspartate 361.

Belongs to the caulimoviridae enzymatic polyprotein family.

The catalysed reaction is DNA(n) + a 2'-deoxyribonucleoside 5'-triphosphate = DNA(n+1) + diphosphate. Its function is as follows. Encodes for at least two polypeptides: protease (PR) and reverse transcriptase (RT). The protease processes the polyprotein in cis. Reverse transcriptase is multifunctional enzyme that converts the viral RNA genome into dsDNA in viral cytoplasmic capsids. This enzyme displays a DNA polymerase activity that can copy either DNA or RNA templates, and a ribonuclease H (RNase H) activity that cleaves the RNA strand of RNA-DNA heteroduplexes in a partially processive 3'- to 5'-endonucleasic mode. Neo-synthesized pregenomic RNA (pgRNA) are encapsidated, and reverse-transcribed inside the nucleocapsid. Partial (+)DNA is synthesized from the (-)DNA template and generates the relaxed circular DNA (RC-DNA) genome. After budding and infection, the RC-DNA migrates in the nucleus, and is converted into a plasmid-like covalently closed circular DNA (cccDNA). The chain is Enzymatic polyprotein from Cestrum parqui (CmYLCV).